We begin with the raw amino-acid sequence, 151 residues long: Arginine repressor (151 aa).

This sequence belongs to the ArgR family.

The protein resides in the cytoplasm. It participates in amino-acid biosynthesis; L-arginine biosynthesis [regulation]. Regulates arginine biosynthesis genes. The polypeptide is Arginine repressor (Haemophilus influenzae (strain PittGG)).